The sequence spans 99 residues: PqqA binding protein (99 aa).

It belongs to the PqqD family. Monomer. Interacts with PqqE.

The protein operates within cofactor biosynthesis; pyrroloquinoline quinone biosynthesis. Functionally, functions as a PqqA binding protein and presents PqqA to PqqE, in the pyrroloquinoline quinone (PQQ) biosynthetic pathway. The polypeptide is PqqA binding protein (Acinetobacter baylyi (strain ATCC 33305 / BD413 / ADP1)).